The following is a 152-amino-acid chain: MVKAVAVLSSSEGVSGTIFFTQDGDAPTTVTGNVSGLKPGLHGFHVHALGDTTNGCMSTGPHYNPAGKEHGAPEDEVRHAGDLGNITVGEDGTASFTLTDKQIPLAGPQSIIGRAVVVHADPDDLGKGGHELSKTTGNAGGRVACGIIGLQG.

The Cu cation site is built by histidine 45, histidine 47, and histidine 62. Cysteine 56 and cysteine 145 are joined by a disulfide. Zn(2+) contacts are provided by histidine 62, histidine 70, histidine 79, and aspartate 82. Histidine 119 serves as a coordination point for Cu cation.

It belongs to the Cu-Zn superoxide dismutase family. In terms of assembly, homodimer. Cu cation is required as a cofactor. Zn(2+) serves as cofactor.

The protein resides in the cytoplasm. The catalysed reaction is 2 superoxide + 2 H(+) = H2O2 + O2. Its function is as follows. Destroys radicals which are normally produced within the cells and which are toxic to biological systems. The polypeptide is Superoxide dismutase [Cu-Zn] (SODCC) (Nicotiana plumbaginifolia (Leadwort-leaved tobacco)).